Here is a 405-residue protein sequence, read N- to C-terminus: MIDPVQTKRHSDENLKEWKIRICSNKDIYNLNWEEIKELINKETGESKGESAYRKWFNNFIEGVEYQRERSDESNNSLLELELKKVEIMEERKKLQAVKHEIHKNTRVKGRTELLYENVTEAIEKVGTLPPPSFYPLNKNERKRAAVLGFGDEHFGKQFKSNNNEYNEQIYLQRMNQILSETVEYIQKENLDELVVLNGADSVEGMALRVSQLTALQYGFIDQVIKYSRYKAEWLLELSKHVKIKYIHIPSANHTELRLHNTNRSEMPKEDVERIIATYIHDVLKDNERIEVPLYDEGIVDFKLLEFEIVACHGHQIKNKKNAIRDISQMKRKFYDYMYISHFHHGNMLTVGEAATHNIQVIQLPSVMGSDEYSDSLMTGAKAGANLSIYESGKGRIIQYDYILN.

A coiled-coil region spans residues 72–101; it reads DESNNSLLELELKKVEIMEERKKLQAVKHE.

This is SPbeta prophage-derived uncharacterized protein YonJ (yonJ) from Bacillus subtilis (strain 168).